The following is a 460-amino-acid chain: tRNA modification GTPase MnmE (460 aa).

Arg-22, Glu-87, and Arg-126 together coordinate (6S)-5-formyl-5,6,7,8-tetrahydrofolate. Residues 222-381 (GLKTAIIGKP…LENTIYNLVF (160 aa)) form the TrmE-type G domain. Asn-232 contributes to the K(+) binding site. Residues 232–237 (NVGKSS), 251–257 (TDIPGTT), and 276–279 (DTAG) contribute to the GTP site. Residue Ser-236 coordinates Mg(2+). Thr-251, Ile-253, and Thr-256 together coordinate K(+). Thr-257 contacts Mg(2+). A (6S)-5-formyl-5,6,7,8-tetrahydrofolate-binding site is contributed by Lys-460.

It belongs to the TRAFAC class TrmE-Era-EngA-EngB-Septin-like GTPase superfamily. TrmE GTPase family. In terms of assembly, homodimer. Heterotetramer of two MnmE and two MnmG subunits. K(+) serves as cofactor.

Its subcellular location is the cytoplasm. In terms of biological role, exhibits a very high intrinsic GTPase hydrolysis rate. Involved in the addition of a carboxymethylaminomethyl (cmnm) group at the wobble position (U34) of certain tRNAs, forming tRNA-cmnm(5)s(2)U34. The protein is tRNA modification GTPase MnmE of Thermoanaerobacter pseudethanolicus (strain ATCC 33223 / 39E) (Clostridium thermohydrosulfuricum).